A 129-amino-acid chain; its full sequence is M-zodatoxin-Lt8l (129 aa).

The first 20 residues, 1–20 (MKYFVVXXALVAAFACIAES), serve as a signal peptide directing secretion. The propeptide occupies 21–60 (KPAESEHELAEVEEENELADLEDAVWLEDLADLSDLEETR).

Belongs to the cationic peptide 06 (cytoinsectotoxin) family. As to expression, expressed by the venom gland.

It is found in the secreted. Functionally, insecticidal, cytolytic and antimicrobial peptide. Forms voltage-dependent, ion-permeable channels in membranes. At high concentration causes cell membrane lysis. This Lachesana tarabaevi (Spider) protein is M-zodatoxin-Lt8l (cit 1-12).